We begin with the raw amino-acid sequence, 161 residues long: RNA pyrophosphohydrolase (161 aa).

The Nudix hydrolase domain maps to 12 to 154 (PYRPGVGMMI…KRKLYQAVVK (143 aa)). The Nudix box signature appears at 46–67 (GGIVPGETPSIAAMREMLEEIG).

It belongs to the Nudix hydrolase family. RppH subfamily. It depends on a divalent metal cation as a cofactor.

Its function is as follows. Accelerates the degradation of transcripts by removing pyrophosphate from the 5'-end of triphosphorylated RNA, leading to a more labile monophosphorylated state that can stimulate subsequent ribonuclease cleavage. This chain is RNA pyrophosphohydrolase, found in Rickettsia bellii (strain OSU 85-389).